We begin with the raw amino-acid sequence, 594 residues long: Arginine--tRNA ligase (594 aa).

The 'HIGH' region motif lies at 139–149 (ANPTGPLHVGH).

This sequence belongs to the class-I aminoacyl-tRNA synthetase family. As to quaternary structure, monomer.

Its subcellular location is the cytoplasm. It carries out the reaction tRNA(Arg) + L-arginine + ATP = L-arginyl-tRNA(Arg) + AMP + diphosphate. The polypeptide is Arginine--tRNA ligase (Burkholderia mallei (strain NCTC 10247)).